A 271-amino-acid chain; its full sequence is Protein phosphatase 1 regulatory subunit 3B-B (271 aa).

The PP1-binding motif motif lies at 56–59 (RVSF). Residues 119 to 227 (RNRLKADSVC…SNKGLNYRIV (109 aa)) enclose the CBM21 domain.

Interacts with glycogen, PPP1CC catalytic subunit of PP1 and PYGL. Associates with glycogen particles. Forms complexes with debranching enzyme, glycogen phosphorylase, glycogen synthase and phosphorylase kinase which is necessary for its regulation of PP1 activity.

Acts as a glycogen-targeting subunit for phosphatase PP1. Facilitates interaction of the PP1 with enzymes of the glycogen metabolism and regulates its activity. Suppresses the rate at which PP1 dephosphorylates (inactivates) glycogen phosphorylase and enhances the rate at which it activates glycogen synthase and therefore limits glycogen breakdown. The protein is Protein phosphatase 1 regulatory subunit 3B-B (ppp1r3b-b) of Xenopus laevis (African clawed frog).